The primary structure comprises 465 residues: Siroheme synthase (465 aa).

The tract at residues 1–203 is precorrin-2 dehydrogenase /sirohydrochlorin ferrochelatase; that stretch reads MDFLPLFHSL…GRPAEAERLL (203 aa). Residues 22–23 and 43–44 contribute to the NAD(+) site; these read EV and PQ. Residue Ser128 is modified to Phosphoserine. Residues 217 to 465 form a uroporphyrinogen-III C-methyltransferase region; sequence GEVYLVGAGP…AWFEGAREGA (249 aa). Pro226 lines the S-adenosyl-L-methionine pocket. Asp249 (proton acceptor) is an active-site residue. The active-site Proton donor is Lys271. Residues 302 to 304, Ile307, 332 to 333, Met384, and Gly413 contribute to the S-adenosyl-L-methionine site; these read GGD and TA.

The protein in the N-terminal section; belongs to the precorrin-2 dehydrogenase / sirohydrochlorin ferrochelatase family. It in the C-terminal section; belongs to the precorrin methyltransferase family.

It carries out the reaction uroporphyrinogen III + 2 S-adenosyl-L-methionine = precorrin-2 + 2 S-adenosyl-L-homocysteine + H(+). It catalyses the reaction precorrin-2 + NAD(+) = sirohydrochlorin + NADH + 2 H(+). The enzyme catalyses siroheme + 2 H(+) = sirohydrochlorin + Fe(2+). The protein operates within cofactor biosynthesis; adenosylcobalamin biosynthesis; precorrin-2 from uroporphyrinogen III: step 1/1. It participates in cofactor biosynthesis; adenosylcobalamin biosynthesis; sirohydrochlorin from precorrin-2: step 1/1. It functions in the pathway porphyrin-containing compound metabolism; siroheme biosynthesis; precorrin-2 from uroporphyrinogen III: step 1/1. Its pathway is porphyrin-containing compound metabolism; siroheme biosynthesis; siroheme from sirohydrochlorin: step 1/1. The protein operates within porphyrin-containing compound metabolism; siroheme biosynthesis; sirohydrochlorin from precorrin-2: step 1/1. In terms of biological role, multifunctional enzyme that catalyzes the SAM-dependent methylations of uroporphyrinogen III at position C-2 and C-7 to form precorrin-2 via precorrin-1. Then it catalyzes the NAD-dependent ring dehydrogenation of precorrin-2 to yield sirohydrochlorin. Finally, it catalyzes the ferrochelation of sirohydrochlorin to yield siroheme. This is Siroheme synthase from Pseudomonas paraeruginosa (strain DSM 24068 / PA7) (Pseudomonas aeruginosa (strain PA7)).